The chain runs to 138 residues: Holo-[acyl-carrier-protein] synthase (138 aa).

The Mg(2+) site is built by aspartate 8 and glutamate 56.

The protein belongs to the P-Pant transferase superfamily. AcpS family. The cofactor is Mg(2+).

Its subcellular location is the cytoplasm. It catalyses the reaction apo-[ACP] + CoA = holo-[ACP] + adenosine 3',5'-bisphosphate + H(+). Functionally, transfers the 4'-phosphopantetheine moiety from coenzyme A to a Ser of acyl-carrier-protein. The chain is Holo-[acyl-carrier-protein] synthase from Thermoanaerobacter pseudethanolicus (strain ATCC 33223 / 39E) (Clostridium thermohydrosulfuricum).